The primary structure comprises 87 residues: Neurotoxin LmNaTx64.1 (87 aa).

The signal sequence occupies residues 1-18 (MKILFLIILTAFFIGVHC). In terms of domain architecture, LCN-type CS-alpha/beta spans 19–85 (KHGYPIIRAG…TWSRATNKCK (67 aa)). 4 disulfide bridges follow: Cys33-Cys84, Cys37-Cys58, Cys44-Cys65, and Cys48-Cys67. Cys84 carries the cysteine amide modification.

This sequence belongs to the long (4 C-C) scorpion toxin superfamily. Sodium channel inhibitor family. Beta subfamily. Expressed by the venom gland.

Its subcellular location is the secreted. Functionally, binds voltage-independently at site-4 of sodium channels (Nav) and shift the voltage of activation toward more negative potentials thereby affecting sodium channel activation and promoting spontaneous and repetitive firing. This is Neurotoxin LmNaTx64.1 from Lychas mucronatus (Chinese swimming scorpion).